Consider the following 135-residue polypeptide: Large ribosomal subunit protein uL16c (135 aa).

It belongs to the universal ribosomal protein uL16 family. Part of the 50S ribosomal subunit.

Its subcellular location is the plastid. It localises to the chloroplast. The sequence is that of Large ribosomal subunit protein uL16c from Lactuca sativa (Garden lettuce).